Here is a 398-residue protein sequence, read N- to C-terminus: Streptopain (398 aa).

Positions 1–27 (MNKKKLGIRLLSLLALGGFVLANPVFA) are cleaved as a signal peptide. Positions 28–145 (DQNFARNEKE…TTYAGTAEIK (118 aa)) are excised as a propeptide. The active-site Nucleophile is the Cys-192. Position 192 is a cysteine methyl disulfide; in zymogen form (Cys-192). A protein contacts are provided by Ser-282 and Gly-339. His-340 functions as the Proton acceptor in the catalytic mechanism. Residues 368 to 390 (RLDALNPSALGTGGGAGGFNGYQ) form a C-terminal active site loop region.

It belongs to the peptidase C10 family. Monomer. Post-translationally, the mature protease is derived from the precursor sequence by cleavage, either in cis via an autocatalytic mechanism, or in trans by mature SpeB or host proteases (trypsin, plasmin or subtilisin). Maturation can involve a number of protein cleavage intermediates. Mature SpeB probably plays the most important role in protein maturation in physiological conditions. Methylthiolation at Cys-192 of the inactive zymogen form is probably involved in the mechanism of secretion of the proteinase into the culture fluid.

The protein localises to the secreted. It is found in the host extracellular space. It localises to the host cytoplasm. It catalyses the reaction Preferential cleavage with hydrophobic residues at P2, P1 and P1'.. Its activity is regulated as follows. Synthesized as an inactive zymogen to protect the intracellular components of the bacteria from proteolytic activity during protein production. Once secreted into the extracellular milieu, cleaved into the active protease: maturation can be mediated in cis by autocatalytic cleavage, or in trans by mature SpeB or host proteases. Protease activity is strongly inhibited by zinc and copper, which prevent its maturation into an active protease: inhibition by metal ions may be required to prevent proteolysis of streptococcal proteins. Its function is as follows. Cysteine protease that acts as a key streptococcal virulence factor by cleaving host proteins involved in immune response. Triggers inflammation by mediating cleavage of host proteins, which can both promote host pathogenesis by triggering sterile inflammation and/or restrict streptococcal infection, depending on host immune statue and infection site. Cleaves host gasdermin-A (GSDMA) in epithelial cells, promoting GSDMA activation and formation of gasdermin pores, triggering pyroptosis. Pyroptosis triggers the elimination of the infected skin cell, depriving the pathogen of its protective niche, while inducing an inflammatory response. This ultimately prevents bacterial penetration of the epithelial barrier and a subsequent systemic dissemination of the pathogen. Also mediates cleavage of the cytokine precursor interleukin-1 beta (IL1B) to its mature form, resulting in inflammation and septic shock. SpeB-mediated maturation of IL1B plays a dual role depending on infection site: while IL1B inflammatory response prevents bacterial growth during invasive skin infections, it promotes streptococcal infection of the nasopharynx by disrupting colonization resistance mediated by the microbiota. Inhibits host autophagy be catalyzing cleavage and inactivation of key autophagy factors, such as CALCOCO2, NBR1 and SQSTM1. Cleaves and inhibits a number of complement factors, such as C2, C3-beta chain of C3, C4, C5 or SERPING1, thereby promoting evasion of host immunity. May also impair adaptive immunity by catalyzing cleavage and degradation of host immunoglobulins to promote immune system evasion; the relevance of this activity is however unsure in vivo. Catalyzes maturation and release of the peptide hormone bradykinin from the precursor Kininogen-1 (KNG1) to produce hypotension during septic shock. Also involved in bacterial translocation across the host epithelial barrier by mediating cleavage and degradation of host epithelial junction proteins, such as CDH1 and OCLN. Additionally, has been involved in degradation of fibronectin and vitronectin, two host extracellular matrix proteins involved in tissue integrity. Also able to catalyze cleavage and degradation of streptococcal proteins, such as C5a peptidase, EndoS or SmeZ. Degradation of streptococcal proteins is however strictly regulated to preserve integrity of other virulence factors. The sequence is that of Streptopain (speB) from Streptococcus pyogenes serotype M3 (strain ATCC BAA-595 / MGAS315).